The chain runs to 197 residues: MHCLQVVIAIVLYSFGKISAENANCKKCTPMLVDSAFKEHGIVPDVVSTAPTKLVNVSYNNLTVNLGNELTPTQVKNQPTKVSWDAEPGALYTLVMTDPDAPSRKNPVFREWHHWLIINISGQNVSSGTVLSDYIGSGPRKGTGLHRYVFLVYKQPGSITDTQHGGNRRNFKVMDFANKHHLGNPVAGNFFQAKHED.

An N-terminal signal peptide occupies residues 1–16 (MHCLQVVIAIVLYSFG). Residues N56, N61, N119, and N124 are each glycosylated (N-linked (GlcNAc...) asparagine).

It belongs to the phosphatidylethanolamine-binding protein family. In terms of tissue distribution, hypodermis, cuticle and uterus.

The protein is OV-16 antigen (OV16) of Onchocerca volvulus.